The following is a 512-amino-acid chain: Replication initiation protein (512 aa).

Its function is as follows. Essential for replication. Binds specifically to a 60-bp region corresponding to the putative origin of replication of pXO2. Also binds nonspecifically to single-stranded DNA with lower affinity. This Bacillus anthracis protein is Replication initiation protein (repS).